Consider the following 375-residue polypeptide: Delta(9) fatty acid conjugase-like enzyme (375 aa).

A run of 2 helical transmembrane segments spans residues 38-58 (LSLS…LFYV) and 66-86 (LPYS…GAFL). Residues 94–98 (HECGH) carry the Histidine box-1 motif. Positions 130–134 (HRNHH) match the Histidine box-2 motif. A run of 3 helical transmembrane segments spans residues 168–188 (FGLV…YLIF), 219–239 (VFFS…IAIA), and 241–261 (GAML…AFIF). Positions 307 to 311 (HVVHH) match the Histidine box-3 motif.

This sequence belongs to the fatty acid desaturase type 1 family.

The protein localises to the membrane. Functionally, involved in the biosynthesis of dimorphecolic acid (9-OH-18:2(10E,12E)). Catalyzes the formation of the C-9 hydroxyl group and the (E)-delta(10) double bond from the trans-linoleic acid (16:2(9Z,12E)) produced by FAD2-1. Very limited activity with cis-linoleic acid (16:2(9Z,12Z)). The polypeptide is Delta(9) fatty acid conjugase-like enzyme (Dimorphotheca sinuata (African daisy)).